Consider the following 371-residue polypeptide: tRNA (guanine(26)-N(2))-dimethyltransferase (371 aa).

The 365-residue stretch at 4-368 folds into the Trm1 methyltransferase domain; sequence IEVTEGRTTF…APLDAIAAAL (365 aa). 5 residues coordinate S-adenosyl-L-methionine: Arg-41, Arg-66, Asp-82, Asp-108, and Ala-109. Residues Cys-237, Cys-240, Cys-256, and Cys-259 each coordinate Zn(2+).

Belongs to the class I-like SAM-binding methyltransferase superfamily. Trm1 family.

The enzyme catalyses guanosine(26) in tRNA + 2 S-adenosyl-L-methionine = N(2)-dimethylguanosine(26) in tRNA + 2 S-adenosyl-L-homocysteine + 2 H(+). Functionally, dimethylates a single guanine residue at position 26 of a number of tRNAs using S-adenosyl-L-methionine as donor of the methyl groups. This Methanosphaerula palustris (strain ATCC BAA-1556 / DSM 19958 / E1-9c) protein is tRNA (guanine(26)-N(2))-dimethyltransferase.